We begin with the raw amino-acid sequence, 84 residues long: Cytochrome b559 subunit alpha (84 aa).

A helical membrane pass occupies residues Ile22–Trp36. His24 is a heme binding site.

It belongs to the PsbE/PsbF family. In terms of assembly, heterodimer of an alpha subunit and a beta subunit. PSII is composed of 1 copy each of membrane proteins PsbA, PsbB, PsbC, PsbD, PsbE, PsbF, PsbH, PsbI, PsbJ, PsbK, PsbL, PsbM, PsbT, PsbX, PsbY, PsbZ, Psb30/Ycf12, at least 3 peripheral proteins of the oxygen-evolving complex and a large number of cofactors. It forms dimeric complexes. Requires heme b as cofactor.

The protein resides in the plastid. Its subcellular location is the chloroplast thylakoid membrane. In terms of biological role, this b-type cytochrome is tightly associated with the reaction center of photosystem II (PSII). PSII is a light-driven water:plastoquinone oxidoreductase that uses light energy to abstract electrons from H(2)O, generating O(2) and a proton gradient subsequently used for ATP formation. It consists of a core antenna complex that captures photons, and an electron transfer chain that converts photonic excitation into a charge separation. This is Cytochrome b559 subunit alpha from Phaeodactylum tricornutum (strain CCAP 1055/1).